Reading from the N-terminus, the 381-residue chain is Probable glucuronosyltransferase Os04g0103100 (381 aa).

Topologically, residues 1-69 (MASIRRPHSP…HTSFRRPLPR (69 aa)) are cytoplasmic. A disordered region spans residues 21–50 (HLGPFASSSPPSSPLRHSSSSSSPRSAAHH). Low complexity predominate over residues 26-46 (ASSSPPSSPLRHSSSSSSPRS). Residues 70–90 (FAAFFLLGSFLGLLHFLSHLP) form a helical; Signal-anchor for type II membrane protein membrane-spanning segment. The Lumenal segment spans residues 91–381 (RPLGPIPNPN…TDLDVIIPLK (291 aa)). The interval 96 to 122 (IPNPNSHHRHRDPFPILQHPHPPSTPH) is disordered. N-linked (GlcNAc...) asparagine glycosylation is found at asparagine 194 and asparagine 296.

It belongs to the glycosyltransferase 43 family.

It is found in the golgi apparatus membrane. In terms of biological role, involved in the synthesis of glucuronoxylan hemicellulose in secondary cell walls. This Oryza sativa subsp. japonica (Rice) protein is Probable glucuronosyltransferase Os04g0103100.